The following is a 1009-amino-acid chain: DNA ligase 4 (1009 aa).

Disordered regions lie at residues 1–34 (METD…APTL) and 51–72 (KKKP…LSAA). Basic residues predominate over residues 51 to 65 (KKKPVGPAGNRRKAG). ATP contacts are provided by glutamate 315, lysine 317, leucine 318, arginine 322, glutamate 384, phenylalanine 424, glutamate 484, lysine 489, lysine 506, and lysine 508. Lysine 317 functions as the N6-AMP-lysine intermediate in the catalytic mechanism. Position 384 (glutamate 384) interacts with Mg(2+). A Mg(2+)-binding site is contributed by glutamate 484. BRCT domains follow at residues 715–808 (PSGH…PDLL) and 887–995 (PCGW…QHMP).

The protein belongs to the ATP-dependent DNA ligase family. It depends on Mg(2+) as a cofactor.

It is found in the nucleus. It catalyses the reaction ATP + (deoxyribonucleotide)n-3'-hydroxyl + 5'-phospho-(deoxyribonucleotide)m = (deoxyribonucleotide)n+m + AMP + diphosphate.. In terms of biological role, DNA ligase involved in DNA non-homologous end joining (NHEJ); required for double-strand break (DSB) repair. The chain is DNA ligase 4 (lig4) from Emericella nidulans (strain FGSC A4 / ATCC 38163 / CBS 112.46 / NRRL 194 / M139) (Aspergillus nidulans).